The following is a 104-amino-acid chain: L-rhamnose mutarotase (104 aa).

Tyr18 lines the substrate pocket. His22 acts as the Proton donor in catalysis. Substrate contacts are provided by residues Tyr41 and 76–77; that span reads WW.

This sequence belongs to the rhamnose mutarotase family. In terms of assembly, homodimer.

It localises to the cytoplasm. It carries out the reaction alpha-L-rhamnose = beta-L-rhamnose. It functions in the pathway carbohydrate metabolism; L-rhamnose metabolism. Functionally, involved in the anomeric conversion of L-rhamnose. The protein is L-rhamnose mutarotase of Escherichia coli (strain K12 / MC4100 / BW2952).